We begin with the raw amino-acid sequence, 351 residues long: uncharacterized protein (351 aa).

This is an uncharacterized protein from Schizosaccharomyces pombe (strain 972 / ATCC 24843) (Fission yeast).